The primary structure comprises 289 residues: ATP synthase subunit a (289 aa).

Helical transmembrane passes span 43-63, 103-123, 160-180, 193-213, 232-252, and 259-279; these read AFHL…LLIF, VIAP…AVDL, FCVF…GGFI, IFVQ…TLIA, VFIL…GLGV, and AVFH…LTIV.

It belongs to the ATPase A chain family. F-type ATPases have 2 components, CF(1) - the catalytic core - and CF(0) - the membrane proton channel. CF(1) has five subunits: alpha(3), beta(3), gamma(1), delta(1), epsilon(1). CF(0) has three main subunits: a(1), b(2) and c(9-12). The alpha and beta chains form an alternating ring which encloses part of the gamma chain. CF(1) is attached to CF(0) by a central stalk formed by the gamma and epsilon chains, while a peripheral stalk is formed by the delta and b chains.

The protein localises to the cell inner membrane. Its function is as follows. Key component of the proton channel; it plays a direct role in the translocation of protons across the membrane. The protein is ATP synthase subunit a of Pseudomonas putida (strain ATCC 700007 / DSM 6899 / JCM 31910 / BCRC 17059 / LMG 24140 / F1).